Here is a 343-residue protein sequence, read N- to C-terminus: Glucokinase (343 aa).

21–26 (ADVGGT) lines the ATP pocket.

The protein belongs to the bacterial glucokinase family.

Its subcellular location is the cytoplasm. It carries out the reaction D-glucose + ATP = D-glucose 6-phosphate + ADP + H(+). The chain is Glucokinase from Cupriavidus pinatubonensis (strain JMP 134 / LMG 1197) (Cupriavidus necator (strain JMP 134)).